A 334-amino-acid chain; its full sequence is Ribosomal RNA small subunit methyltransferase H (334 aa).

Residues 53–55, aspartate 72, phenylalanine 99, aspartate 122, and histidine 129 contribute to the S-adenosyl-L-methionine site; that span reads GGH.

Belongs to the methyltransferase superfamily. RsmH family.

It is found in the cytoplasm. The enzyme catalyses cytidine(1402) in 16S rRNA + S-adenosyl-L-methionine = N(4)-methylcytidine(1402) in 16S rRNA + S-adenosyl-L-homocysteine + H(+). In terms of biological role, specifically methylates the N4 position of cytidine in position 1402 (C1402) of 16S rRNA. The sequence is that of Ribosomal RNA small subunit methyltransferase H from Leptospira interrogans serogroup Icterohaemorrhagiae serovar Lai (strain 56601).